The sequence spans 658 residues: UvrABC system protein B (658 aa).

The Helicase ATP-binding domain maps to 26–413; it reads EGINSGKKKQ…SPEVIEQIIR (388 aa). 39–46 contacts ATP; the sequence is GATGTGKT. A Beta-hairpin motif is present at residues 92 to 115; the sequence is YYDYYQPEAYVPQTDTFIEKDAQI. A Helicase C-terminal domain is found at 430–596; the sequence is QIDDLLGEIQ…TIQKGVRDVI (167 aa). Residues 622–657 enclose the UVR domain; that stretch reads EKTIAKMEAEMKEAAKALDFERAAELRDLLLELKAE.

It belongs to the UvrB family. As to quaternary structure, forms a heterotetramer with UvrA during the search for lesions. Interacts with UvrC in an incision complex.

Its subcellular location is the cytoplasm. Its function is as follows. The UvrABC repair system catalyzes the recognition and processing of DNA lesions. A damage recognition complex composed of 2 UvrA and 2 UvrB subunits scans DNA for abnormalities. Upon binding of the UvrA(2)B(2) complex to a putative damaged site, the DNA wraps around one UvrB monomer. DNA wrap is dependent on ATP binding by UvrB and probably causes local melting of the DNA helix, facilitating insertion of UvrB beta-hairpin between the DNA strands. Then UvrB probes one DNA strand for the presence of a lesion. If a lesion is found the UvrA subunits dissociate and the UvrB-DNA preincision complex is formed. This complex is subsequently bound by UvrC and the second UvrB is released. If no lesion is found, the DNA wraps around the other UvrB subunit that will check the other stand for damage. The chain is UvrABC system protein B from Bacillus cereus (strain ATCC 10987 / NRS 248).